We begin with the raw amino-acid sequence, 332 residues long: Probable allantoicase (332 aa).

This sequence belongs to the allantoicase family.

It catalyses the reaction allantoate + H2O = (S)-ureidoglycolate + urea. It functions in the pathway nitrogen metabolism; (S)-allantoin degradation; (S)-ureidoglycolate from allantoate (aminidohydrolase route): step 1/1. The polypeptide is Probable allantoicase (Pseudomonas aeruginosa (strain LESB58)).